The chain runs to 1089 residues: Translocase of chloroplast 120, chloroplastic (1089 aa).

Glycine 2 bears the N-acetylglycine mark. Disordered stretches follow at residues 158 to 179 (ATED…GVVS), 255 to 339 (TLSP…GLGR), and 353 to 381 (QPRV…EHDE). Polar residues predominate over residues 165–176 (ENGNTHSSSENG). Phosphoserine is present on residues serine 179, serine 263, and serine 283. The segment covering 300-312 (EIKESQHMERESE) has biased composition (basic and acidic residues). Residues 327–339 (AALPPARPAGLGR) show a composition bias toward low complexity. Over residues 353 to 374 (QPRVNGNVSHNQPQQAEDSTTA) the composition is skewed to polar residues. The AIG1-type G domain maps to 454–683 (DFSCTIMVLG…KLQDNIPGGQ (230 aa)). A G1 region spans residues 463–470 (GKSGVGKS). GTP is bound by residues 466 to 471 (GVGKSA) and 485 to 490 (DAFQVG). Residue serine 470 coordinates Mg(2+). Residues 485 to 488 (DAFQ) are homodimerization. Residues 489–493 (VGTKK) are G2. The tract at residues 510 to 513 (DTPG) is G3. The interval 548–553 (RLDMQS) is homodimerization. The interval 582–585 (THAA) is G4. GTP is bound by residues histidine 583 and 631–632 (EN). Positions 631-633 (ENH) are G5. The segment at 710-748 (PEQQYDDEDDEDDLDESSDSEEESEYDELPPFKRLTKAE) is disordered. A compositionally biased stretch (acidic residues) spans 713–737 (QYDDEDDEDDLDESSDSEEESEYDE). Residues 767–788 (REKLFMKRQMKEERKRRKLLKK) are a coiled coil. The chain crosses the membrane as a helical span at residues 1064 to 1080 (LAVVALVPLFKKLLTYY).

This sequence belongs to the TRAFAC class TrmE-Era-EngA-EngB-Septin-like GTPase superfamily. AIG1/Toc34/Toc159-like paraseptin GTPase family. TOC159 subfamily. As to quaternary structure, homodimer. Part of the TOC core complex that includes 1 protein for the specific recognition of transit peptides surrounded by a ring composed of four proteins forming translocation channels, and four to five GTP-binding proteins providing energy. This core complex can interact with components of the TIC complex to form a larger import complex. Chloroplastic protein precursor such as prSS (precursor of the RuBisCO small subunit) interacts with these complexes. The TOC complex contains a specific subset of polar lipids such as digalactosyldiacylglyceride (DGDG), phosphatidylcholine (PC) and phosphatidylglycerol (PG). Mg(2+) serves as cofactor. Post-translationally, phosphorylated by KOC1. As to expression, expressed in seedlings, flowers, and roots.

It localises to the plastid. Its subcellular location is the chloroplast outer membrane. The protein resides in the cytoplasm. Functionally, GTPase involved in protein precursor import into chloroplasts. Seems to recognize chloroplast-destined precursor proteins and regulate their presentation to the translocation channel through GTP hydrolysis. Probably specialized in the import of nuclear encoded non-photosynthetic preproteins from the cytoplasm to the chloroplast. This chain is Translocase of chloroplast 120, chloroplastic, found in Arabidopsis thaliana (Mouse-ear cress).